Here is a 548-residue protein sequence, read N- to C-terminus: Chaperonin GroEL (548 aa).

Residues 30 to 33 (TLGP), K51, 87 to 91 (DGTTT), G415, and D496 contribute to the ATP site.

The protein belongs to the chaperonin (HSP60) family. In terms of assembly, forms a cylinder of 14 subunits composed of two heptameric rings stacked back-to-back. Interacts with the co-chaperonin GroES.

The protein resides in the cytoplasm. It catalyses the reaction ATP + H2O + a folded polypeptide = ADP + phosphate + an unfolded polypeptide.. Its function is as follows. Together with its co-chaperonin GroES, plays an essential role in assisting protein folding. The GroEL-GroES system forms a nano-cage that allows encapsulation of the non-native substrate proteins and provides a physical environment optimized to promote and accelerate protein folding. The sequence is that of Chaperonin GroEL from Haemophilus influenzae (strain ATCC 51907 / DSM 11121 / KW20 / Rd).